Here is an 860-residue protein sequence, read N- to C-terminus: GAS2-like protein 2 (860 aa).

Positions 1 to 12 are enriched in basic residues; the sequence is MSQHVGHGRRPR. Residues 1–22 form a disordered region; sequence MSQHVGHGRRPRTPGPPVRSIR. The Calponin-homology (CH) domain maps to 32 to 159; the sequence is EAMKEDLAEW…CLLELGRRAW (128 aa). The 73-residue stretch at 201 to 273 folds into the GAR domain; it reads CHFHNLDQMV…HYLDKHDPCR (73 aa). 5 disordered regions span residues 281–459, 473–574, 697–743, 758–781, and 801–860; these read PGSF…SLAS, QLSE…RHTS, TTVR…KGKR, KLRPRIRPRRDHRPEKRPSRIPKP, and ATLG…ESWV. Polar residues predominate over residues 301 to 316; that stretch reads GPSQPQPTMTISRSQS. Residues 347 to 364 are compositionally biased toward basic and acidic residues; sequence PPVRARTLREDPLPRSQE. Composition is skewed to polar residues over residues 365-393 and 473-485; these read KPTPSQRMSSPGPQFSSTCRGPDLQSTLS and QLSEPMTVHSSSP. Positions 431 to 860 are interaction with ADORA2A and GNAS; that stretch reads QRLQIPEATS…PLSPEEESWV (430 aa). Residues 530–549 show a composition bias toward basic and acidic residues; sequence NLDRSTHGHHSVEASGDHQT. The segment covering 724-733 has biased composition (polar residues); it reads RSCSDPSSDK. Residues 758–768 are compositionally biased toward basic residues; the sequence is KLRPRIRPRRD. Positions 828-840 are enriched in polar residues; it reads SNISLESSIQPAE.

It belongs to the GAS2 family. Interacts with ADORA2A (via its cytoplasmic C-terminal domain). Interacts with GNAS, GNAL, GNAQ, and GNA13. Interacts with MAPRE1. Expressed in tracheal epithelial cells (at protein level).

It localises to the cytoplasm. It is found in the cytoskeleton. The protein localises to the cell membrane. Its subcellular location is the stress fiber. The protein resides in the cilium basal body. Involved in the cross-linking of microtubules and microfilaments. Regulates microtubule dynamics and stability by interacting with microtubule plus-end tracking proteins, such as MAPRE1, to regulate microtubule growth along actin stress fibers. Enhances ADORA2-mediated adenylyl cyclase activation by acting as a scaffold to recruit trimeric G-protein complexes to ADORA2A. Regulates ciliary orientation and performance in cells located in the airway. This chain is GAS2-like protein 2 (Gas2l2), found in Mus musculus (Mouse).